The primary structure comprises 197 residues: Guanylate kinase (197 aa).

A Guanylate kinase-like domain is found at 10-187 (GSLFIVSAPA…AYQVLRSILI (178 aa)). An ATP-binding site is contributed by 17 to 24 (APAGTGKT).

This sequence belongs to the guanylate kinase family.

The protein localises to the cytoplasm. The catalysed reaction is GMP + ATP = GDP + ADP. Functionally, essential for recycling GMP and indirectly, cGMP. This Protochlamydia amoebophila (strain UWE25) protein is Guanylate kinase.